The primary structure comprises 228 residues: Heptaprenylglyceryl phosphate synthase (228 aa).

Lys-12 contributes to the sn-glycerol 1-phosphate binding site. Mg(2+)-binding residues include Asp-14 and Ser-40. Residues 158-163 (YLEYSG), Gly-188, and 208-209 (GN) contribute to the sn-glycerol 1-phosphate site.

Belongs to the GGGP/HepGP synthase family. Group I subfamily. In terms of assembly, homodimer. Mg(2+) is required as a cofactor.

It catalyses the reaction sn-glycerol 1-phosphate + all-trans-heptaprenyl diphosphate = 3-heptaprenyl-sn-glycero-1-phosphate + diphosphate. Its pathway is membrane lipid metabolism; glycerophospholipid metabolism. Functionally, prenyltransferase that catalyzes in vivo the transfer of the heptaprenyl moiety of heptaprenyl pyrophosphate (HepPP; 35 carbon atoms) to the C3 hydroxyl of sn-glycerol-1-phosphate (G1P), producing heptaprenylglyceryl phosphate (HepGP). This reaction is an ether-bond-formation step in the biosynthesis of archaea-type G1P-based membrane lipids found in Bacillales. To a much lesser extent, is also able to use geranyl diphosphate (GPP; C10) and geranylgeranyl diphosphate (GGPP; C20) as the prenyl donors, but not farnesyl pyrophosphate (FPP; C15). Cannot use glycerol-3-phosphate (G3P) or 3-phosphoglycerate (3PG) as an acceptor. This is Heptaprenylglyceryl phosphate synthase from Bacillus subtilis (strain 168).